The primary structure comprises 132 residues: Large ribosomal subunit protein uL14 (132 aa).

It belongs to the universal ribosomal protein uL14 family. In terms of assembly, part of the 50S ribosomal subunit. Forms a cluster with proteins L3 and L24e, part of which may contact the 16S rRNA in 2 intersubunit bridges.

Binds to 23S rRNA. Forms part of two intersubunit bridges in the 70S ribosome. The sequence is that of Large ribosomal subunit protein uL14 from Methanospirillum hungatei JF-1 (strain ATCC 27890 / DSM 864 / NBRC 100397 / JF-1).